A 590-amino-acid polypeptide reads, in one-letter code: DNA mismatch repair protein MutL (590 aa).

The segment covering 335-351 (PLSSASPKLPESTTATA) has biased composition (polar residues). The segment at 335-354 (PLSSASPKLPESTTATAQPH) is disordered.

The protein belongs to the DNA mismatch repair MutL/HexB family.

In terms of biological role, this protein is involved in the repair of mismatches in DNA. It is required for dam-dependent methyl-directed DNA mismatch repair. May act as a 'molecular matchmaker', a protein that promotes the formation of a stable complex between two or more DNA-binding proteins in an ATP-dependent manner without itself being part of a final effector complex. The sequence is that of DNA mismatch repair protein MutL from Dichelobacter nodosus (strain VCS1703A).